The primary structure comprises 497 residues: Acetyl-coenzyme A carboxylase carboxyl transferase subunit beta (497 aa).

A CoA carboxyltransferase N-terminal domain is found at 217 to 489 (LWLQCDNCYG…NQNSNQYSQY (273 aa)). The Zn(2+) site is built by C221, C224, C240, and C243. The segment at 221 to 243 (CDNCYGLNYKKVLKSKMTICEQC) adopts a C4-type zinc-finger fold.

Belongs to the AccD/PCCB family. As to quaternary structure, acetyl-CoA carboxylase is a heterohexamer composed of biotin carboxyl carrier protein, biotin carboxylase and 2 subunits each of ACCase subunit alpha and ACCase plastid-coded subunit beta (accD). It depends on Zn(2+) as a cofactor.

The protein localises to the plastid. The enzyme catalyses N(6)-carboxybiotinyl-L-lysyl-[protein] + acetyl-CoA = N(6)-biotinyl-L-lysyl-[protein] + malonyl-CoA. Its pathway is lipid metabolism; malonyl-CoA biosynthesis; malonyl-CoA from acetyl-CoA: step 1/1. Component of the acetyl coenzyme A carboxylase (ACC) complex. Biotin carboxylase (BC) catalyzes the carboxylation of biotin on its carrier protein (BCCP) and then the CO(2) group is transferred by the transcarboxylase to acetyl-CoA to form malonyl-CoA. The chain is Acetyl-coenzyme A carboxylase carboxyl transferase subunit beta from Cuscuta reflexa (Southern Asian dodder).